Consider the following 204-residue polypeptide: Putative glutathione S-transferase alpha-3 (204 aa).

N-acetylthreonine is present on T2. The GST N-terminal domain occupies 2–79 (TKPQLSYFKV…YIASQHDFVG (78 aa)). Residues Y8, 49 to 50 (QL), and 63 to 64 (QS) contribute to the glutathione site. The region spanning 81-202 (TPEEKALVDE…YLKNRPITER (122 aa)) is the GST C-terminal domain.

This sequence belongs to the GST superfamily. Alpha family.

The catalysed reaction is RX + glutathione = an S-substituted glutathione + a halide anion + H(+). Its function is as follows. Conjugation of reduced glutathione to a wide number of exogenous and endogenous hydrophobic electrophiles. In Dictyostelium discoideum (Social amoeba), this protein is Putative glutathione S-transferase alpha-3 (gsta3).